The following is a 234-amino-acid chain: Gem-associated protein 8 (234 aa).

A disordered region spans residues 60 to 116; that stretch reads LAQSPAAKGGTSPKSRSKSPSASGDACRRRSRPGKPGPQRRSTEKPARFAEDNDSES. Low complexity predominate over residues 67 to 83; the sequence is KGGTSPKSRSKSPSASG. A compositionally biased stretch (basic and acidic residues) spans 100–110; that stretch reads RSTEKPARFAE. The stretch at 130–153 forms a coiled coil; that stretch reads ITDELRQYFAETEQHREELRRQHQ.

As to quaternary structure, part of the core SMN complex that contains SMN1, GEMIN2/SIP1, DDX20/GEMIN3, GEMIN4, GEMIN5, GEMIN6, GEMIN7, GEMIN8 and STRAP/UNRIP. Part of the SMN-Sm complex that contains SMN1, GEMIN2/SIP1, DDX20/GEMIN3, GEMIN4, GEMIN5, GEMIN6, GEMIN7, GEMIN8, STRAP/UNRIP and the Sm proteins SNRPB, SNRPD1, SNRPD2, SNRPD3, SNRPE, SNRPF and SNRPG. Interacts with GEMIN6; the interaction is direct. Interacts with GEMIN7; the interaction is direct. Interacts with SMN1; the interaction is direct. Interacts with GEMIN4; the interaction is direct.

It localises to the nucleus. Its subcellular location is the gem. The protein resides in the cytoplasm. Functionally, the SMN complex catalyzes the assembly of small nuclear ribonucleoproteins (snRNPs), the building blocks of the spliceosome, and thereby plays an important role in the splicing of cellular pre-mRNAs. Most spliceosomal snRNPs contain a common set of Sm proteins SNRPB, SNRPD1, SNRPD2, SNRPD3, SNRPE, SNRPF and SNRPG that assemble in a heptameric protein ring on the Sm site of the small nuclear RNA to form the core snRNP (Sm core). In the cytosol, the Sm proteins SNRPD1, SNRPD2, SNRPE, SNRPF and SNRPG are trapped in an inactive 6S pICln-Sm complex by the chaperone CLNS1A that controls the assembly of the core snRNP. To assemble core snRNPs, the SMN complex accepts the trapped 5Sm proteins from CLNS1A forming an intermediate. Binding of snRNA inside 5Sm triggers eviction of the SMN complex, thereby allowing binding of SNRPD3 and SNRPB to complete assembly of the core snRNP. This is Gem-associated protein 8 (GEMIN8) from Bos taurus (Bovine).